Here is a 32-residue protein sequence, read N- to C-terminus: Dermaseptin-8 (32 aa).

Residue Gln32 is modified to Glutamine amide.

Expressed by the skin glands.

The protein resides in the secreted. Functionally, antimicrobial peptide, active against the Gram-positive bacterium S.aureus, and the Gram-negative bacteriun E.coli. Has hemolytic activity at 432 uM. The chain is Dermaseptin-8 from Phyllomedusa tarsius (Brownbelly leaf frog).